The sequence spans 366 residues: tRNA 2-selenouridine synthase (366 aa).

A Rhodanese domain is found at Phe-12 to Glu-136. The active-site S-selanylcysteine intermediate is the Cys-95.

It belongs to the SelU family. Monomer.

It carries out the reaction 5-methylaminomethyl-2-thiouridine(34) in tRNA + selenophosphate + (2E)-geranyl diphosphate + H2O + H(+) = 5-methylaminomethyl-2-selenouridine(34) in tRNA + (2E)-thiogeraniol + phosphate + diphosphate. The catalysed reaction is 5-methylaminomethyl-2-thiouridine(34) in tRNA + (2E)-geranyl diphosphate = 5-methylaminomethyl-S-(2E)-geranyl-thiouridine(34) in tRNA + diphosphate. It catalyses the reaction 5-methylaminomethyl-S-(2E)-geranyl-thiouridine(34) in tRNA + selenophosphate + H(+) = 5-methylaminomethyl-2-(Se-phospho)selenouridine(34) in tRNA + (2E)-thiogeraniol. The enzyme catalyses 5-methylaminomethyl-2-(Se-phospho)selenouridine(34) in tRNA + H2O = 5-methylaminomethyl-2-selenouridine(34) in tRNA + phosphate. Involved in the post-transcriptional modification of the uridine at the wobble position (U34) of tRNA(Lys), tRNA(Glu) and tRNA(Gln). Catalyzes the conversion of 2-thiouridine (S2U-RNA) to 2-selenouridine (Se2U-RNA). Acts in a two-step process involving geranylation of 2-thiouridine (S2U) to S-geranyl-2-thiouridine (geS2U) and subsequent selenation of the latter derivative to 2-selenouridine (Se2U) in the tRNA chain. This is tRNA 2-selenouridine synthase from Cupriavidus pinatubonensis (strain JMP 134 / LMG 1197) (Cupriavidus necator (strain JMP 134)).